The chain runs to 354 residues: Nucleoporin seh1 (354 aa).

WD repeat units lie at residues 10-49, 55-96, 112-153, 161-209, 216-259, and 270-309; these read DHKD…KWNV, AHSG…KVSS, DSRT…NLSQ, SNKL…RKCV, DITD…TDIS, and EHNC…QWRC.

This sequence belongs to the WD repeat SEC13 family. In terms of assembly, probable component of the nuclear pore complex (NPC). Component of the GATOR complex consisting of mio, Nup44A/Seh1, Im11, Nplr3, Nplr2, Wdr24, Wdr59 and Sec13. Within the GATOR complex, probable component of the GATOR2 subcomplex which is likely composed of mio, Nup44A/Seh1, Wdr24, Wdr59 and Sec13. Interacts with mio. Interacts with Wdr24. The GATOR2 complex associates with unmet in the absence of S-adenosyl-L-methionine; the mio-Wdr24-Nup44A subcomplex is essential and sufficient for this interaction while Wdr59 and Sec13 are dispensable. This association acts as a nutrient sensor to inhibit mTORC1 signaling in the absence of methionine. In terms of tissue distribution, expressed in ovarian cysts.

The protein resides in the nucleus envelope. It is found in the lysosome. In terms of biological role, probable component of the nuclear pore complex (NPC). Involved in maintaining the localization of another nucleoporin Mgtor to the nuclear envelope of early meiotic female germline cells. It is not involved in recruiting the nucleoporins Mgtor, Nup107, Nup153 and FG-containing nucleoporins to the NPC. An essential component of the GATOR subcomplex GATOR2 which functions as an activator of the amino acid-sensing branch of the mTORC1 signaling pathway. The two GATOR subcomplexes, GATOR1 and GATOR2, regulate the mTORC1 pathway in order to mediate metabolic homeostasis, female gametogenesis and the response to amino acid limitation and complete starvation. GATOR2 activates the mTORC1 signaling pathway through the inhibition of the GATOR1 subcomplex, controlling the switch to cell proliferation growth under nutrient replete conditions and growth during female oocyte development. This component is required for activating mTORC1 specifically in germline cells to promote cell growth and maintain the oocyte fate, probably influences the organization and/or function of microtubules within ovarian cysts, and promotes accumulation of another GATOR2 complex member mio in germline and somatic tissues. GATOR1 and GATOR2 act at different stages of oogenesis to regulate mTORC1 in order to control meiotic entry and promote oocyte growth and development. After exactly four mitotic cyst divisions, the GATOR1 complex members (Iml1, Nprl2 and Nprl3) down-regulate mTORC1 to slow cellular metabolism and promote the mitotic/meiotic transition. At later stages of oogenesis, the mio and Nup44A components of the GATOR2 complex inhibit GATOR1 and thus activate mTORC1 to promote meiotic progression, and drive oocyte growth and development. In addition to its role in the regulation of the mTORC1 complex, functions independently of mTORC1 to prevent the inappropriate accumulation of autolysosomes in germline tissues. The sequence is that of Nucleoporin seh1 from Drosophila melanogaster (Fruit fly).